Here is a 377-residue protein sequence, read N- to C-terminus: Homoserine O-succinyltransferase (377 aa).

The AB hydrolase-1 domain maps to 50–358 (NAILVCHALS…PSTYGHDSFL (309 aa)). Catalysis depends on serine 156, which acts as the Nucleophile. A substrate-binding site is contributed by arginine 226. Active-site residues include aspartate 321 and histidine 354. Aspartate 355 contributes to the substrate binding site.

Belongs to the AB hydrolase superfamily. MetX family. Homodimer.

Its subcellular location is the cytoplasm. The enzyme catalyses L-homoserine + succinyl-CoA = O-succinyl-L-homoserine + CoA. Its pathway is amino-acid biosynthesis; L-methionine biosynthesis via de novo pathway; O-succinyl-L-homoserine from L-homoserine: step 1/1. Functionally, transfers a succinyl group from succinyl-CoA to L-homoserine, forming succinyl-L-homoserine. This is Homoserine O-succinyltransferase from Nitrosomonas eutropha (strain DSM 101675 / C91 / Nm57).